We begin with the raw amino-acid sequence, 192 residues long: Fe/S biogenesis protein NfuA (192 aa).

[4Fe-4S] cluster contacts are provided by C149 and C152.

This sequence belongs to the NfuA family. In terms of assembly, homodimer. [4Fe-4S] cluster serves as cofactor.

Its function is as follows. Involved in iron-sulfur cluster biogenesis. Binds a 4Fe-4S cluster, can transfer this cluster to apoproteins, and thereby intervenes in the maturation of Fe/S proteins. Could also act as a scaffold/chaperone for damaged Fe/S proteins. The sequence is that of Fe/S biogenesis protein NfuA from Idiomarina loihiensis (strain ATCC BAA-735 / DSM 15497 / L2-TR).